Consider the following 440-residue polypeptide: ATP-dependent RNA helicase sub2 (440 aa).

A compositionally biased stretch (acidic residues) spans 1–16; that stretch reads MSHEEDLIDYSDEELQ. The interval 1-42 is disordered; the sequence is MSHEEDLIDYSDEELQTTDAAATTAAPASNGEAKKGDLTVSG. A compositionally biased stretch (low complexity) spans 17–28; it reads TTDAAATTAAPA. Residues 57 to 85 carry the Q motif motif; that stretch reads TGFRDFLLKEELLRAITDCGFEHPSEVQQ. The region spanning 88–263 is the Helicase ATP-binding domain; sequence IPTAILNVDV…KKFMRNPLEV (176 aa). 101–108 contacts ATP; that stretch reads AKSGLGKT. The short motif at 210 to 213 is the DEAD box element; that stretch reads DECD. Positions 291–436 constitute a Helicase C-terminal domain; it reads KLNELLDSLE…EYPEGGVDSS (146 aa).

This sequence belongs to the DEAD box helicase family. DECD subfamily.

It localises to the nucleus. The enzyme catalyses ATP + H2O = ADP + phosphate + H(+). In terms of biological role, ATP-binding RNA helicase involved in transcription elongation and required for the export of mRNA out of the nucleus. SUB2 also plays a role in pre-mRNA splicing and spliceosome assembly. May be involved in rDNA and telomeric silencing, and maintenance of genome integrity. The sequence is that of ATP-dependent RNA helicase sub2 (sub2) from Aspergillus niger (strain ATCC MYA-4892 / CBS 513.88 / FGSC A1513).